We begin with the raw amino-acid sequence, 212 residues long: Ras-related protein Rab-43 (212 aa).

A GTP-binding site is contributed by 25-32 (GDASVGKT). An Effector region motif is present at residues 47–55 (QGSTIGVDF). S49 carries the phosphoserine modification. 73 to 77 (DTAGQ) serves as a coordination point for GTP. T82 carries the post-translational modification Phosphothreonine; by LRRK2. Residues 131–134 (NKSD) and 163–164 (AK) each bind GTP. S193 is subject to Phosphoserine. S-geranylgeranyl cysteine attachment occurs at residues C210 and C212. Residue C212 is modified to Cysteine methyl ester.

It belongs to the small GTPase superfamily. Rab family. In terms of assembly, interacts with GDI1, GDI2, CHM and CHML; phosphorylation at Thr-82 disrupts these interactions. Widely expressed in brain, testis, lung, heart, ovary, colon, kidney, uterus and spleen but not in liver.

The protein resides in the cytoplasmic vesicle. The protein localises to the phagosome. It localises to the phagosome membrane. It is found in the golgi apparatus. Its subcellular location is the trans-Golgi network membrane. The protein resides in the trans-Golgi network. Its function is as follows. The small GTPases Rab are key regulators of intracellular membrane trafficking, from the formation of transport vesicles to their fusion with membranes. Rabs cycle between an inactive GDP-bound form and an active GTP-bound form that is able to recruit to membranes different set of downstream effectors directly responsible for vesicle formation, movement, tethering and fusion. The low intrinsic GTPase activity of RAB43 is activated by USP6NL. Involved in retrograde transport from the endocytic pathway to the Golgi apparatus. Involved in the transport of Shiga toxin from early and recycling endosomes to the trans-Golgi network. Required for the structural integrity of the Golgi complex. Plays a role in the maturation of phagosomes that engulf pathogens, such as S.aureus and M.tuberculosis. The chain is Ras-related protein Rab-43 (RAB43) from Homo sapiens (Human).